The primary structure comprises 424 residues: S-adenosylmethionine synthase (424 aa).

Residue histidine 14 participates in ATP binding. Aspartate 16 contacts Mg(2+). Residue glutamate 42 participates in K(+) binding. Positions 55 and 98 each coordinate L-methionine. Residues 98–108 are flexible loop; that stretch reads QSNDISRGIER. Residues 165 to 167, 242 to 243, aspartate 251, 257 to 258, alanine 274, and lysine 278 contribute to the ATP site; these read DAK, KF, and RK. Aspartate 251 contacts L-methionine. Lysine 282 provides a ligand contact to L-methionine.

Belongs to the AdoMet synthase family. As to quaternary structure, homotetramer; dimer of dimers. Mg(2+) serves as cofactor. It depends on K(+) as a cofactor.

It is found in the cytoplasm. It carries out the reaction L-methionine + ATP + H2O = S-adenosyl-L-methionine + phosphate + diphosphate. It functions in the pathway amino-acid biosynthesis; S-adenosyl-L-methionine biosynthesis; S-adenosyl-L-methionine from L-methionine: step 1/1. Functionally, catalyzes the formation of S-adenosylmethionine (AdoMet) from methionine and ATP. The overall synthetic reaction is composed of two sequential steps, AdoMet formation and the subsequent tripolyphosphate hydrolysis which occurs prior to release of AdoMet from the enzyme. The sequence is that of S-adenosylmethionine synthase from Azobacteroides pseudotrichonymphae genomovar. CFP2.